We begin with the raw amino-acid sequence, 333 residues long: Dehydrodolichyl diphosphate synthase complex subunit Dhdds (333 aa).

Positions 34, 35, 37, 38, and 85 each coordinate (2E,6E)-farnesyl diphosphate. Asp34 contacts Mg(2+). The isopentenyl diphosphate site is built by Arg38, Arg85, Arg205, Arg211, and Ser213.

Belongs to the UPP synthase family. In terms of assembly, the active dehydrodolichyl diphosphate synthase complex is a heterotetramer composed of a dimer of heterodimer of DHDDS and NUS1. Interacts with NPC2. Mg(2+) is required as a cofactor.

It localises to the endoplasmic reticulum membrane. It catalyses the reaction n isopentenyl diphosphate + (2E,6E)-farnesyl diphosphate = a di-trans,poly-cis-polyprenyl diphosphate + n diphosphate. The protein operates within protein modification; protein glycosylation. Its pathway is lipid metabolism. In terms of biological role, with NUS1, forms the dehydrodolichyl diphosphate synthase (DDS) complex, an essential component of the dolichol monophosphate (Dol-P) biosynthetic machinery. Both subunits contribute to enzymatic activity, i.e. condensation of multiple copies of isopentenyl pyrophosphate (IPP) to farnesyl pyrophosphate (FPP) to produce dehydrodolichyl diphosphate (Dedol-PP), a precursor of dolichol phosphate which is utilized as a sugar carrier in protein glycosylation in the endoplasmic reticulum (ER). Synthesizes long-chain polyprenols, mostly of C95 and C100 chain length. Regulates the glycosylation and stability of nascent NPC2, thereby promoting trafficking of LDL-derived cholesterol. The polypeptide is Dehydrodolichyl diphosphate synthase complex subunit Dhdds (Mus musculus (Mouse)).